The chain runs to 68 residues: ATP synthase subunit c (68 aa).

2 helical membrane passes run 5–25 (AAAI…GMIV) and 47–67 (FIGV…AFMV).

It belongs to the ATPase C chain family. In terms of assembly, F-type ATPases have 2 components, F(1) - the catalytic core - and F(0) - the membrane proton channel. F(1) has five subunits: alpha(3), beta(3), gamma(1), delta(1), epsilon(1). F(0) has three main subunits: a(1), b(2) and c(10-14). The alpha and beta chains form an alternating ring which encloses part of the gamma chain. F(1) is attached to F(0) by a central stalk formed by the gamma and epsilon chains, while a peripheral stalk is formed by the delta and b chains.

The protein localises to the cell membrane. Its function is as follows. F(1)F(0) ATP synthase produces ATP from ADP in the presence of a proton or sodium gradient. F-type ATPases consist of two structural domains, F(1) containing the extramembraneous catalytic core and F(0) containing the membrane proton channel, linked together by a central stalk and a peripheral stalk. During catalysis, ATP synthesis in the catalytic domain of F(1) is coupled via a rotary mechanism of the central stalk subunits to proton translocation. Key component of the F(0) channel; it plays a direct role in translocation across the membrane. A homomeric c-ring of between 10-14 subunits forms the central stalk rotor element with the F(1) delta and epsilon subunits. The protein is ATP synthase subunit c of Oceanobacillus iheyensis (strain DSM 14371 / CIP 107618 / JCM 11309 / KCTC 3954 / HTE831).